Consider the following 825-residue polypeptide: Penicillin-binding protein 1A (825 aa).

Residues 1–6 are Cytoplasmic-facing; it reads MKFIKR. Residues 7–27 traverse the membrane as a helical; Signal-anchor for type II membrane protein segment; it reads LLVFSLICIILGVTTIFGFYF. At 28–825 the chain is on the periplasmic side; sequence YVKSDLPDVA…YSTSSGEELF (798 aa). Positions 48–216 are transglycosylase; the sequence is MQVFSQDGKL…STMNPIYSVE (169 aa). Glu-86 (proton donor; for transglycosylase activity) is an active-site residue. Positions 413–752 are transpeptidase; it reads PRTQDGAITA…GKTALPAWVE (340 aa). The active-site Acyl-ester intermediate; for transpeptidase activity is Ser-471.

In the N-terminal section; belongs to the glycosyltransferase 51 family. This sequence in the C-terminal section; belongs to the transpeptidase family.

Its subcellular location is the cell inner membrane. It carries out the reaction [GlcNAc-(1-&gt;4)-Mur2Ac(oyl-L-Ala-gamma-D-Glu-L-Lys-D-Ala-D-Ala)](n)-di-trans,octa-cis-undecaprenyl diphosphate + beta-D-GlcNAc-(1-&gt;4)-Mur2Ac(oyl-L-Ala-gamma-D-Glu-L-Lys-D-Ala-D-Ala)-di-trans,octa-cis-undecaprenyl diphosphate = [GlcNAc-(1-&gt;4)-Mur2Ac(oyl-L-Ala-gamma-D-Glu-L-Lys-D-Ala-D-Ala)](n+1)-di-trans,octa-cis-undecaprenyl diphosphate + di-trans,octa-cis-undecaprenyl diphosphate + H(+). It catalyses the reaction Preferential cleavage: (Ac)2-L-Lys-D-Ala-|-D-Ala. Also transpeptidation of peptidyl-alanyl moieties that are N-acyl substituents of D-alanine.. It participates in cell wall biogenesis; peptidoglycan biosynthesis. Cell wall formation. Synthesis of cross-linked peptidoglycan from the lipid intermediates. The enzyme has a penicillin-insensitive transglycosylase N-terminal domain (formation of linear glycan strands) and a penicillin-sensitive transpeptidase C-terminal domain (cross-linking of the peptide subunits). The chain is Penicillin-binding protein 1A (mrcA) from Vibrio cholerae serotype O1 (strain ATCC 39315 / El Tor Inaba N16961).